Here is a 1148-residue protein sequence, read N- to C-terminus: Putative transcription factor SEF1 (1148 aa).

A disordered region spans residues 1 to 51 (MVKDNRDSDQDQDFSSAHMKRQPEQQQLQQHQFPSKKQRISHHDDSHQINH). A Phosphoserine modification is found at Ser-8. The segment at residues 57-87 (CTHCRQHKIKCDASQNFPHPCSRCEKIGLHC) is a DNA-binding region (zn(2)-C6 fungal-type). The disordered stretch occupies residues 148 to 180 (PTPGTIIPNPDSSPSSGSPTSSAAQRDSKVSVQ). Residues 150–169 (PGTIIPNPDSSPSSGSPTSS) show a composition bias toward low complexity. Phosphoserine is present on Ser-263. The disordered stretch occupies residues 524 to 550 (EESEEDNNDSIDNNNNDKRNKKDEPHV). The segment covering 538 to 550 (NNDKRNKKDEPHV) has biased composition (basic and acidic residues). Ser-806 carries the post-translational modification Phosphoserine. Residues 1029–1050 (RSQSSMSHSRTPIASKSNNMTD) are compositionally biased toward polar residues. The segment at 1029–1063 (RSQSSMSHSRTPIASKSNNMTDLHSVVSDPGSSKS) is disordered.

The protein resides in the nucleus. In terms of biological role, putative transcription factor that seems to be involved in the sporulation process. Suppresses the lethal phenotype of RPM2 deletion. The chain is Putative transcription factor SEF1 (SEF1) from Saccharomyces cerevisiae (strain ATCC 204508 / S288c) (Baker's yeast).